The sequence spans 1248 residues: MGHLELLLVENFKSWRGRQVIGPFKRFTCIIGPNGSGKSNVMDALSFVMGEKTTNLRVKNIQELIHGAHTGKPVSSSASVTIIYIEDSGEEKTFTRIIRGGCSEYHFGDKPVSRSVYVAQLENIGIIVKAQNCLVFQGTVESISMKKPKERTQFFEEISTSGEFIGEYEAKKKKLQKAEEDAQFHFNVKKNVAAERKHAKIEKEEAEHYQNLLEELKINKIQLMLFQLYYNEEKINVLNTELEQMDGNLSVVKDTLSHHENIFKAKKKDYGMLTRQLQQTAKELKSVEAILNQKRPQYIKAKENTSHHLKKLDLSKKLITDNEKQCSKQEDGIRALVAELADLDRAWKSFEKQMEEKILQKGRDIELENSQLDRYKLLKEQVRRKVGIMTQQLEKLQWEQKAEKERLAFEKRRHGDTQGNLKQIKEQIEEHKKRIEKLEEYTKTCMDCLEDKKQQEEALKKEIENTKSRMSEVNEELSLIRNELQNAGIDNHEGKRQQKRAEVLEHLKRLYPDSVFGRLLDLCHPIHKKYQLAVTKLFGRYMVAIVVASEKIAKDCIRFLKAERAEPETFLALDYLDIKPINERLREIKGCKMMIDVIKTQFPQLKKVIQFVCGNGLVCETVEEARHIAFGGPERRKAVALDGTLFLKSGVISGGSSDLKHKALCWDEKELHNLRDKRSQLVQELKELMKTLRKETDLKQIQTLVQGTNTRLKYSQNELEMIKKKHLATFYREQSQLQSELLNIDSQCTMLSEGINKQQQKIEEFQDKIDEVEDDIFQDFCEEIGVENIREFENKHVKQQQENDQKRLEFEKQKTRLNIQLEYSRNQLKKKLNNIDTLKTTIQKGKEDIDNLKKTEEECLKIVEELMVKQEQIKEVLATQSSNIEKIHIQIEEERKKVLAVDREVGKLQKEVVIIQGSLEQKLLEKHNLLLDCKVQDIDISLVLGSLEDIIEMELTETESTQATADIYEKEASIQIDYSPLREDLKALQSDKEVEAHLTLLLQQVASQENTLLKTTAPNLRAQENLKTVRDKFQESADVFEASRKEARICRQEFEQVKRRRYDAFSQCFEHISVSIDQIYKKLCRNNSAQAFLSPENPEEPYLDGISYNCVAPGKRFMPMDNLSGGEKCVAALALLFAVHSFRPAPFFVLDEVDAALDNTNIGKVSSYIKEQSQEQFQMIIISLKEEFYSKADALIGVYPEHNECMFSHVLTLDLSKYPDTEDQEGSRSHRKPRVPRVSMSPKSPQSR.

Position 32 to 39 (32 to 39 (GPNGSGKS)) interacts with ATP. Residues 163 to 502 (EFIGEYEAKK…EGKRQQKRAE (340 aa)) are a coiled coil. Residues 514 to 629 (SVFGRLLDLC…ETVEEARHIA (116 aa)) enclose the SMC hinge domain. N6-acetyllysine occurs at positions 648, 713, and 1032. Residues 666–912 (WDEKELHNLR…REVGKLQKEV (247 aa)) adopt a coiled-coil conformation. A compositionally biased stretch (basic and acidic residues) spans 1219–1228 (PDTEDQEGSR). Residues 1219 to 1248 (PDTEDQEGSRSHRKPRVPRVSMSPKSPQSR) form a disordered region.

The protein belongs to the SMC family. SMC1 subfamily. Forms a heterodimer with SMC3. Component of a meiosis-specific cohesin complex, probably composed of the SMC1B and SMC3 heterodimer attached via their SMC hinge domain, RAD21 (or its meiosis-specific related protein REC8), which link them, and STAG3, which interacts with RAD21 or REC8. The cohesin complex interacts with the cohesin loading complex subunits NIPBL/Scc2 (via HEAT repeats) and MAU2/Scc4. NIPBL directly contacts all members of the complex, RAD21, SMC1A/B, SMC3 and STAG1. Spermatocytes (at protein level). Testis and ovary specific. Not expressed in somatic cells.

It localises to the nucleus. The protein resides in the chromosome. It is found in the centromere. Meiosis-specific component of cohesin complex. Required for the maintenance of meiotic cohesion, but not, or only to a minor extent, for its establishment. Contributes to axial element (AE) formation and the organization of chromatin loops along the AE. Plays a key role in synapsis, recombination and chromosome movements. The cohesin complex is required for the cohesion of sister chromatids after DNA replication. The cohesin complex apparently forms a large proteinaceous ring within which sister chromatids can be trapped. At anaphase, the complex is cleaved and dissociates from chromatin, allowing sister chromatids to segregate. The meiosis-specific cohesin complex probably replaces mitosis specific cohesin complex when it dissociates from chromatin during prophase I. The sequence is that of Structural maintenance of chromosomes protein 1B (Smc1b) from Mus musculus (Mouse).